A 395-amino-acid chain; its full sequence is Argininosuccinate synthase (395 aa).

8 to 16 (AYSGGLDTS) lines the ATP pocket. The L-citrulline site is built by Tyr86 and Ser91. Gly116 contacts ATP. Residues Thr118, Asn122, and Asp123 each coordinate L-aspartate. Residue Asn122 participates in L-citrulline binding. The L-citrulline site is built by Arg126, Ser172, Ser181, Glu257, and Tyr269.

This sequence belongs to the argininosuccinate synthase family. Type 1 subfamily. Homotetramer.

Its subcellular location is the cytoplasm. It carries out the reaction L-citrulline + L-aspartate + ATP = 2-(N(omega)-L-arginino)succinate + AMP + diphosphate + H(+). It participates in amino-acid biosynthesis; L-arginine biosynthesis; L-arginine from L-ornithine and carbamoyl phosphate: step 2/3. This is Argininosuccinate synthase from Methanosarcina barkeri (strain Fusaro / DSM 804).